The following is a 340-amino-acid chain: Acidic endochitinase WIN6 (340 aa).

An N-terminal signal peptide occupies residues 1–22 (MSVWALFAFFSLFLSLSVRGSA). Residues 23-63 (EQCGRQAGDALCPGGLCCSSYGWCGTTVDYCGIGCQSQCDG) enclose the Chitin-binding type-1 domain. Intrachain disulfides connect cysteine 25–cysteine 40, cysteine 34–cysteine 46, cysteine 39–cysteine 53, and cysteine 57–cysteine 61. The tract at residues 64 to 85 (GGGGDGGDDGCDGGDDGGGDGD) is spacer. Residues 86–340 (DGYLSDIIPK…YGLSGLKDTM (255 aa)) are chitinase. 3 cysteine pairs are disulfide-bonded: cysteine 110–cysteine 172, cysteine 183–cysteine 191, and cysteine 290–cysteine 323. Glutamate 154 acts as the Proton donor in catalysis.

Belongs to the glycosyl hydrolase 19 family. Chitinase class I subfamily.

The catalysed reaction is Random endo-hydrolysis of N-acetyl-beta-D-glucosaminide (1-&gt;4)-beta-linkages in chitin and chitodextrins.. In terms of biological role, defense against chitin-containing fungal pathogens. This Populus trichocarpa (Western balsam poplar) protein is Acidic endochitinase WIN6 (WIN6).